The following is a 74-amino-acid chain: STKNGRDSNSKRLGVKVYGNQPIKKGGIIIRQRGLTFKPGINVAVGKDYTLFALQEGDVKFETIANRKFVSVIK.

The protein belongs to the bacterial ribosomal protein bL27 family.

The protein resides in the plastid. It localises to the chloroplast. The polypeptide is Large ribosomal subunit protein bL27c (rpl27) (Pleurochrysis haptonemofera (Unicellular marine alga)).